Reading from the N-terminus, the 249-residue chain is 3-deoxy-manno-octulosonate cytidylyltransferase (249 aa).

The protein belongs to the KdsB family.

It is found in the cytoplasm. The catalysed reaction is 3-deoxy-alpha-D-manno-oct-2-ulosonate + CTP = CMP-3-deoxy-beta-D-manno-octulosonate + diphosphate. The protein operates within nucleotide-sugar biosynthesis; CMP-3-deoxy-D-manno-octulosonate biosynthesis; CMP-3-deoxy-D-manno-octulosonate from 3-deoxy-D-manno-octulosonate and CTP: step 1/1. It participates in bacterial outer membrane biogenesis; lipopolysaccharide biosynthesis. Activates KDO (a required 8-carbon sugar) for incorporation into bacterial lipopolysaccharide in Gram-negative bacteria. The sequence is that of 3-deoxy-manno-octulosonate cytidylyltransferase from Oleidesulfovibrio alaskensis (strain ATCC BAA-1058 / DSM 17464 / G20) (Desulfovibrio alaskensis).